The primary structure comprises 332 residues: Melanocortin receptor 4 (332 aa).

Topologically, residues 1 to 43 are extracellular; it reads MNSTQPLGMHTSLHSWNRSAHGMPTNVSESLAKGYSDGGCYEQ. Residues N2, N17, and N26 are each glycosylated (N-linked (GlcNAc...) asparagine). 2 disulfides stabilise this stretch: C40/C279 and C271/C277. Residues 44–69 form a helical membrane-spanning segment; that stretch reads LFVSPEVFVTLGVISLLENILVIVAI. The Cytoplasmic segment spans residues 70–81; sequence AKNKNLHSPMYF. The chain crosses the membrane as a helical span at residues 82–106; it reads FICSLAVADMLVSVSNGSETIVITL. The Ca(2+) site is built by E100, D122, and D126. The Extracellular portion of the chain corresponds to 107-123; the sequence is LNSTDTDAQSFTVDIDN. Residues 124-145 form a helical membrane-spanning segment; that stretch reads VIDSVICSSLLASICSLLSIAV. Topologically, residues 146-165 are cytoplasmic; that stretch reads DRYFTIFYALQYHNIMTVKR. Residues 166 to 186 form a helical membrane-spanning segment; that stretch reads VAITISAIWAACTVSGVLFII. At 187 to 191 the chain is on the extracellular side; the sequence is YSDSS. The helical transmembrane segment at 192–215 threads the bilayer; the sequence is AVIICLITVFFTMLALMASLYVHM. Over 216–248 the chain is Cytoplasmic; it reads FLMARLHIKRIAVLPGSGTIRQGANMKGAITLT. A helical transmembrane segment spans residues 249–271; sequence ILIGVFVVCWAPFFLHLIFYISC. Topologically, residues 272–280 are extracellular; the sequence is PQNPYCVCF. A helical membrane pass occupies residues 281–304; the sequence is MSHFNLYLILIMCNSIIDPLIYAL. The Cytoplasmic portion of the chain corresponds to 305–332; it reads RSQELRKTFKEIICCSPLGGLCDLSSRY. C318 is lipidated: S-palmitoyl cysteine.

Belongs to the G-protein coupled receptor 1 family. Homodimer; disulfide-linked, also forms higher order oligomers. Interacts with GNAS. Interacts with ATRNL1. Interacts with MGRN1; this interaction competes with GNAS-binding and thus inhibits agonist-induced cAMP production. Interacts with MRAP and MRAP2; these associated factors increase ligand-sensitivity and generation of cAMP.

The protein resides in the cell membrane. Its function is as follows. Hormone receptor that acts as a key component of the leptin-melanocortin pathway at the intersection of homeostatic maintenance of energetic state. Plays a role in regulating food intake: activation by a stimulating hormone such as anorexigenic alpha-melanocyte stimulating hormone (alpha-MSH) inhibits appetite, whereas binding to a natural antagonist like Agouti-related protein/AGRP promotes appetite. G-protein-coupled receptor that activates conventional Galphas signaling leading to induction of anorexogenic signaling in the hypothalamus to result in negative energy balance. Regulates the firing activity of neurons from the hypothalamus by alpha-MSH and AGRP independently of Galphas signaling by ligand-induced coupling of closure of inwardly rectifying potassium channel KCNJ13. In intestinal epithelial cells, plays a role in the inhibition of hepatic glucose production via nesfatin-1/NUCB2 leading to increased cyclic adenosine monophosphate (cAMP) levels and glucagon-like peptide 1 (GLP-1) secretion in the intestinal epithelium. The sequence is that of Melanocortin receptor 4 (MC4R) from Bos taurus (Bovine).